The sequence spans 606 residues: Adenine deaminase (606 aa).

Belongs to the metallo-dependent hydrolases superfamily. Adenine deaminase family. It depends on Mn(2+) as a cofactor.

It catalyses the reaction adenine + H2O + H(+) = hypoxanthine + NH4(+). The polypeptide is Adenine deaminase (Rubrobacter xylanophilus (strain DSM 9941 / JCM 11954 / NBRC 16129 / PRD-1)).